The sequence spans 320 residues: TATA box-binding protein-like 2 (320 aa).

Belongs to the TBP family. In terms of tissue distribution, expression is restricted to the gonads, and is higher in the ovary than the testis.

It localises to the nucleus. Functionally, TATA box-binding transcription factor. Members of the TBP family are differentially required to regulate transcription and development during early embryogenesis. Required for gastrulation. Regulates a large subset of genes that are ventrally expressed. Binds to a subset of promoters. This is TATA box-binding protein-like 2 from Xenopus laevis (African clawed frog).